A 151-amino-acid polypeptide reads, in one-letter code: Ribonuclease H (151 aa).

The region spanning 2-143 is the RNase H type-1 domain; that stretch reads SSNVIEIYAD…ADALANKGVD (142 aa). Mg(2+)-binding residues include aspartate 11, glutamate 49, aspartate 71, and aspartate 135.

Belongs to the RNase H family. In terms of assembly, monomer. Mg(2+) serves as cofactor.

It is found in the cytoplasm. It carries out the reaction Endonucleolytic cleavage to 5'-phosphomonoester.. Functionally, endonuclease that specifically degrades the RNA of RNA-DNA hybrids. The protein is Ribonuclease H of Methylobacillus flagellatus (strain ATCC 51484 / DSM 6875 / VKM B-1610 / KT).